A 548-amino-acid chain; its full sequence is Membrane protein insertase YidC (548 aa).

Residues 6–26 (NLLVIALLFVSFMIWQAWEQD) form a helical membrane-spanning segment. A disordered region spans residues 28-56 (NPQPQTQQTTQTTTTAAGSAADQGVPASG). The span at 29 to 42 (PQPQTQQTTQTTTT) shows a compositional bias: low complexity. 4 helical membrane passes run 350 to 370 (FVGN…GIMY), 424 to 444 (FPLI…MGSI), 458 to 478 (LSAQ…MFFI), and 499 to 519 (PVIF…YYIV).

This sequence belongs to the OXA1/ALB3/YidC family. Type 1 subfamily. Interacts with the Sec translocase complex via SecD. Specifically interacts with transmembrane segments of nascent integral membrane proteins during membrane integration.

It is found in the cell inner membrane. Required for the insertion and/or proper folding and/or complex formation of integral membrane proteins into the membrane. Involved in integration of membrane proteins that insert both dependently and independently of the Sec translocase complex, as well as at least some lipoproteins. Aids folding of multispanning membrane proteins. The chain is Membrane protein insertase YidC from Salmonella choleraesuis (strain SC-B67).